A 401-amino-acid chain; its full sequence is Riboflavin biosynthesis protein RibBA (401 aa).

Positions 1–203 (MTDFQFSKVE…IQQLQEYRRK (203 aa)) are DHBP synthase. D-ribulose 5-phosphate contacts are provided by residues 30–31 (RE), Asp35, 142–146 (RNGHT), and Glu166. Glu31 is a binding site for Mg(2+). A Mg(2+)-binding site is contributed by His145. The tract at residues 204–401 (HDSLVKQISV…QIKMGHMFNF (198 aa)) is GTP cyclohydrolase II. Residue 254-258 (RIHSE) participates in GTP binding. Zn(2+) is bound by residues Cys259, Cys270, and Cys272. Residues Gln275, 297 to 299 (EGR), and Thr319 each bind GTP. The active-site Proton acceptor; for GTP cyclohydrolase activity is the Asp331. The active-site Nucleophile; for GTP cyclohydrolase activity is the Arg333. Residues Thr354 and Lys359 each coordinate GTP.

The protein in the N-terminal section; belongs to the DHBP synthase family. It in the C-terminal section; belongs to the GTP cyclohydrolase II family. The cofactor is Mg(2+). It depends on Mn(2+) as a cofactor. Zn(2+) is required as a cofactor.

The enzyme catalyses D-ribulose 5-phosphate = (2S)-2-hydroxy-3-oxobutyl phosphate + formate + H(+). The catalysed reaction is GTP + 4 H2O = 2,5-diamino-6-hydroxy-4-(5-phosphoribosylamino)-pyrimidine + formate + 2 phosphate + 3 H(+). The protein operates within cofactor biosynthesis; riboflavin biosynthesis; 2-hydroxy-3-oxobutyl phosphate from D-ribulose 5-phosphate: step 1/1. Its pathway is cofactor biosynthesis; riboflavin biosynthesis; 5-amino-6-(D-ribitylamino)uracil from GTP: step 1/4. In terms of biological role, catalyzes the conversion of D-ribulose 5-phosphate to formate and 3,4-dihydroxy-2-butanone 4-phosphate. Functionally, catalyzes the conversion of GTP to 2,5-diamino-6-ribosylamino-4(3H)-pyrimidinone 5'-phosphate (DARP), formate and pyrophosphate. This is Riboflavin biosynthesis protein RibBA from Actinobacillus pleuropneumoniae serotype 3 (strain JL03).